A 202-amino-acid chain; its full sequence is Small ribosomal subunit protein uS4 (202 aa).

The disordered stretch occupies residues 15 to 42; the sequence is LGDLPGLTRKAAKRSYPPGQHGQARRKR. Positions 90 to 152 constitute an S4 RNA-binding domain; it reads NRLDNVCFRI…KCSKLLAEAN (63 aa).

Belongs to the universal ribosomal protein uS4 family. Part of the 30S ribosomal subunit. Contacts protein S5. The interaction surface between S4 and S5 is involved in control of translational fidelity.

Functionally, one of the primary rRNA binding proteins, it binds directly to 16S rRNA where it nucleates assembly of the body of the 30S subunit. Its function is as follows. With S5 and S12 plays an important role in translational accuracy. This is Small ribosomal subunit protein uS4 from Synechococcus sp. (strain CC9311).